The primary structure comprises 133 residues: Snaclec echicetin subunit alpha (133 aa).

3 disulfide bridges follow: Cys4–Cys15, Cys31–Cys127, and Cys102–Cys119. In terms of domain architecture, C-type lectin spans 11–128 (YEGHCYQLFR…CEFKFPFVCK (118 aa)).

Belongs to the snaclec family. Heterodimer of subunits alpha and beta; disulfide-linked. Forms an active complex with the pentameric immunoglobuline Mkappa (IgMkappa). In terms of tissue distribution, expressed by the venom gland.

It is found in the secreted. Functionally, echicetin itself inhibits aggregation of washed platelets induced by vWF, thrombin or alboaggregin-A. However, when complexed with the pentameric plasma immunoglobulin Mkappa (IgMkappa), echicetin binds specifically to GPIb and activates platelets. This is caused by P-selectin expression and activation of alpha-IIb/beta-3 as well as tyrosine phosphorylation of several signal transduction molecules, including p53/56(LYN), p64, p72(SYK), p70 to p90, and p120. In vivo, it induces thrombocytopenia when injected into mice, probably accounting of activation of platelets rather than inhibition. The polypeptide is Snaclec echicetin subunit alpha (Echis carinatus sochureki (Saw-scaled viper)).